The sequence spans 449 residues: Putative recombination initiation defects 3 (449 aa).

A disordered region spans residues 21-56 (LRRSAEPQASQQLRSQQSQQSFSQGPSSSQRGCGGF). Residues 28–50 (QASQQLRSQQSQQSFSQGPSSSQ) are compositionally biased toward low complexity. Residues 437–441 (RTKRK) carry the Nuclear localization signal motif.

Interacts with PRD1; this interaction facilitates a binding to DFO.

The protein resides in the nucleus. Its function is as follows. Involved in DNA cleavage that forms the double-strand breaks (DSB) that initiate meiotic recombination. The chain is Putative recombination initiation defects 3 from Arabidopsis thaliana (Mouse-ear cress).